The chain runs to 272 residues: Shikimate dehydrogenase (NADP(+)) (272 aa).

Residues 14–16 (SKS) and threonine 61 contribute to the shikimate site. Lysine 65 functions as the Proton acceptor in the catalytic mechanism. Glutamate 77 lines the NADP(+) pocket. Shikimate-binding residues include asparagine 86 and aspartate 102. NADP(+) contacts are provided by residues 126–130 (GAGGA), 149–154 (NRTASR), and methionine 213. Tyrosine 215 is a binding site for shikimate. Glycine 237 is an NADP(+) binding site.

Belongs to the shikimate dehydrogenase family. Homodimer.

It carries out the reaction shikimate + NADP(+) = 3-dehydroshikimate + NADPH + H(+). The protein operates within metabolic intermediate biosynthesis; chorismate biosynthesis; chorismate from D-erythrose 4-phosphate and phosphoenolpyruvate: step 4/7. Involved in the biosynthesis of the chorismate, which leads to the biosynthesis of aromatic amino acids. Catalyzes the reversible NADPH linked reduction of 3-dehydroshikimate (DHSA) to yield shikimate (SA). The chain is Shikimate dehydrogenase (NADP(+)) from Salmonella heidelberg (strain SL476).